A 1054-amino-acid chain; its full sequence is Bifunctional glutamine synthetase adenylyltransferase/adenylyl-removing enzyme (1054 aa).

Residues 1–535 (MRKTLPSIGA…LHRKLFYRPL (535 aa)) form an adenylyl removase region. Polar residues-rich tracts occupy residues 138–150 (SFSS…QGSD) and 165–175 (DTANTDLSTPG). The interval 138 to 175 (SFSSESQQPQGSDSDSEFSFGADLSADDTANTDLSTPG) is disordered. Residues 541-1054 (NISVGTLKLS…WGVDSIEHDY (514 aa)) are adenylyl transferase.

It belongs to the GlnE family. It depends on Mg(2+) as a cofactor.

The catalysed reaction is [glutamine synthetase]-O(4)-(5'-adenylyl)-L-tyrosine + phosphate = [glutamine synthetase]-L-tyrosine + ADP. The enzyme catalyses [glutamine synthetase]-L-tyrosine + ATP = [glutamine synthetase]-O(4)-(5'-adenylyl)-L-tyrosine + diphosphate. Functionally, involved in the regulation of glutamine synthetase GlnA, a key enzyme in the process to assimilate ammonia. When cellular nitrogen levels are high, the C-terminal adenylyl transferase (AT) inactivates GlnA by covalent transfer of an adenylyl group from ATP to specific tyrosine residue of GlnA, thus reducing its activity. Conversely, when nitrogen levels are low, the N-terminal adenylyl removase (AR) activates GlnA by removing the adenylyl group by phosphorolysis, increasing its activity. The regulatory region of GlnE binds the signal transduction protein PII (GlnB) which indicates the nitrogen status of the cell. This chain is Bifunctional glutamine synthetase adenylyltransferase/adenylyl-removing enzyme, found in Corynebacterium diphtheriae (strain ATCC 700971 / NCTC 13129 / Biotype gravis).